Here is a 328-residue protein sequence, read N- to C-terminus: Formimidoylglutamase (328 aa).

Residues histidine 133, aspartate 159, histidine 161, aspartate 163, aspartate 253, and aspartate 255 each contribute to the Mn(2+) site.

Belongs to the arginase family. Mn(2+) is required as a cofactor.

It catalyses the reaction N-formimidoyl-L-glutamate + H2O = formamide + L-glutamate. Its pathway is amino-acid degradation; L-histidine degradation into L-glutamate; L-glutamate from N-formimidoyl-L-glutamate (hydrolase route): step 1/1. Its function is as follows. Catalyzes the conversion of N-formimidoyl-L-glutamate to L-glutamate and formamide. This Streptococcus pyogenes serotype M5 (strain Manfredo) protein is Formimidoylglutamase.